We begin with the raw amino-acid sequence, 206 residues long: Outer-membrane lipoprotein LolB (206 aa).

Positions 1-21 (MHERNYAVFRLLPLASLLLAA) are cleaved as a signal peptide. A lipid anchor (N-palmitoyl cysteine) is attached at Cys22. The S-diacylglycerol cysteine moiety is linked to residue Cys22.

The protein belongs to the LolB family. Monomer.

Its subcellular location is the cell outer membrane. In terms of biological role, plays a critical role in the incorporation of lipoproteins in the outer membrane after they are released by the LolA protein. The polypeptide is Outer-membrane lipoprotein LolB (Sodalis glossinidius (strain morsitans)).